The sequence spans 206 residues: Probable glutathione peroxidase 3, mitochondrial (206 aa).

A mitochondrion-targeting transit peptide spans 1 to 12 (MPRSSRWVNQRA). Residue Cys-80 is part of the active site.

This sequence belongs to the glutathione peroxidase family. As to quaternary structure, interacts with ABI1 and ABI2. Ubiquitous.

Its subcellular location is the mitochondrion. It carries out the reaction 2 glutathione + H2O2 = glutathione disulfide + 2 H2O. The redox states are modulated by H(2)O(2). Its function is as follows. May constitute a glutathione peroxidase-like protective system against oxidative stresses. Involved positively in abscisic acid (ABA) signaling pathway that regulates numerous ABA responses, such as stomatal closure, seed germination and inhibition of vegetative growth. Oxidizes and represses target proteins (e.g. the phosphatase activity of ABI1 and ABI2) when oxidized by H(2)O(2), probably after ABA signaling. Modulates the calcium channel activity in guard cells in response to ABA or H(2)O(2). Confers tolerance to drought stress, by enhancing the ABA-dependent stomatal closure. This Arabidopsis thaliana (Mouse-ear cress) protein is Probable glutathione peroxidase 3, mitochondrial (GPX3).